Here is a 768-residue protein sequence, read N- to C-terminus: Vacuolar basic amino acid transporter 4 (768 aa).

Residues 1–252 are Cytoplasmic-facing; sequence MGKKDRQRKK…HDLTRRRIFS (252 aa). A coiled-coil region spans residues 9-40; it reads KKLREFAKLKNRQRNLRKSVQTLKNEVQREAK. A disordered region spans residues 34 to 172; it reads EVQREAKVPR…ELPVSSSNSF (139 aa). Ser62, Ser99, and Ser106 each carry phosphoserine. The segment covering 110-121 has biased composition (basic and acidic residues); that stretch reads KPADKANEDDLK. Polar residues predominate over residues 132–159; it reads SALQSSITDFSDRSVSPLQSITSCNTPM. A phosphoserine mark is found at Ser160 and Ser192. Residues 253–273 form a helical membrane-spanning segment; it reads SCMCTYLFFIAMDSSIILVIA. At 274 to 282 the chain is on the vacuolar side; sequence SKIASEFHE. A helical transmembrane segment spans residues 283 to 305; the sequence is LWRLSLVISAYLLSNAIGQLVFL. Over 306-311 the chain is Cytoplasmic; it reads KLSLIS. A helical transmembrane segment spans residues 312–331; it reads SVKLLLCIAQFSFILGGYLS. At 332-334 the chain is on the vacuolar side; it reads WSS. The chain crosses the membrane as a helical span at residues 335–357; that stretch reads AHFWTFIFARCVTGFGGGSLIAL. The Cytoplasmic portion of the chain corresponds to 358–375; it reads KSTIMNRFSQKNDSRYSL. Residues 376-396 traverse the membrane as a helical segment; sequence SASMITFAMGVVIGPFMMNLF. The Vacuolar portion of the chain corresponds to 397-406; the sequence is DSSHGSGWRN. A helical transmembrane segment spans residues 407–427; it reads AFLIPVPFCLVNASIMLADMY. The Cytoplasmic segment spans residues 428–447; the sequence is SVKSTLYGRPTPTLWKRFKN. A helical membrane pass occupies residues 448-468; the sequence is TLLSPDLYEILTLTLFLLCFV. At 469-481 the chain is on the vacuolar side; sequence QVTSLDLTGLKNN. Asn480 carries N-linked (GlcNAc...) asparagine glycosylation. A helical membrane pass occupies residues 482 to 502; that stretch reads TMIQALLFSVIIVCGILFFLI. The Cytoplasmic segment spans residues 503–522; that stretch reads ETSDTYMNSVISMSLQGDKR. The helical transmembrane segment at 523-543 threads the bilayer; the sequence is LIWTMIGISFCFAALMCIIPF. The Vacuolar segment spans residues 544-562; that stretch reads GTTYFIIVLNLSTLQLAER. A glycan (N-linked (GlcNAc...) asparagine) is linked at Asn553. Residues 563–583 traverse the membrane as a helical segment; sequence LSPFFFSIVLGYFSVSYFWKS. Residues 584–587 are Cytoplasmic-facing; it reads KGQN. Residues 588 to 608 form a helical membrane-spanning segment; that stretch reads FLLKFVLSGATLLLYVALMGV. Residues 609-617 are Vacuolar-facing; it reads SLNLPVWKQ. The helical transmembrane segment at 618–638 threads the bilayer; sequence YICLSLPFLGSSMILTLLSNL. Over 639–653 the chain is Cytoplasmic; sequence YHEYHEQRKSPISGS. A helical membrane pass occupies residues 654 to 674; the sequence is IVYCFGAVGGTVGISLGGYVF. Residues 675 to 734 are Vacuolar-facing; the sequence is HKTLIKLMHEKVMPFSKQGYLKKDLLKIIKHATESSDWVHESAPKFVFQTLIECYLQACR. Residues 735-755 traverse the membrane as a helical segment; the sequence is NVFKLSTLFFTITVVAIFIFN. The Cytoplasmic segment spans residues 756–768; that stretch reads RIHCRSQNCLSLS.

It belongs to the major facilitator superfamily.

The protein resides in the vacuole membrane. Transporter required for vacuolar uptake of basic amino acids. In Saccharomyces cerevisiae (strain ATCC 204508 / S288c) (Baker's yeast), this protein is Vacuolar basic amino acid transporter 4 (VBA4).